Reading from the N-terminus, the 311-residue chain is Purine nucleoside phosphorylase (311 aa).

An N-acetylserine modification is found at Ser2. Residues Ser46, His81, 101 to 103 (RLH), and Ala134 contribute to the phosphate site. Glu219 is an a purine D-ribonucleoside binding site. A phosphate-binding site is contributed by Ser238. Asn261 is a binding site for a purine D-ribonucleoside. Position 275 is a phosphoserine (Ser275).

Belongs to the PNP/MTAP phosphorylase family.

It catalyses the reaction a purine D-ribonucleoside + phosphate = a purine nucleobase + alpha-D-ribose 1-phosphate. The protein operates within purine metabolism; purine nucleoside salvage. Its function is as follows. The purine nucleoside phosphorylases catalyze the phosphorolytic breakdown of the N-glycosidic bond in the beta-(deoxy)ribonucleoside molecules, with the formation of the corresponding free purine bases and pentose-1-phosphate. Cleaves guanosine and inosine. The protein is Purine nucleoside phosphorylase (PNP1) of Saccharomyces cerevisiae (strain ATCC 204508 / S288c) (Baker's yeast).